A 416-amino-acid polypeptide reads, in one-letter code: Ribulose bisphosphate carboxylase large chain (416 aa).

Substrate-binding residues include Asn100 and Thr150. Catalysis depends on Lys152, which acts as the Proton acceptor. Lys154 contributes to the substrate binding site. Lys178, Asp180, and Glu181 together coordinate Mg(2+). Position 178 is an N6-carboxylysine (Lys178). Catalysis depends on His271, which acts as the Proton acceptor. Substrate contacts are provided by Arg272, His304, and Ser356.

Belongs to the RuBisCO large chain family. Type I subfamily. In terms of assembly, heterohexadecamer of 8 large chains and 8 small chains; disulfide-linked. The disulfide link is formed within the large subunit homodimers. It depends on Mg(2+) as a cofactor. In terms of processing, the disulfide bond which can form in the large chain dimeric partners within the hexadecamer appears to be associated with oxidative stress and protein turnover.

The protein resides in the plastid. Its subcellular location is the chloroplast. It catalyses the reaction 2 (2R)-3-phosphoglycerate + 2 H(+) = D-ribulose 1,5-bisphosphate + CO2 + H2O. The catalysed reaction is D-ribulose 1,5-bisphosphate + O2 = 2-phosphoglycolate + (2R)-3-phosphoglycerate + 2 H(+). Its function is as follows. RuBisCO catalyzes two reactions: the carboxylation of D-ribulose 1,5-bisphosphate, the primary event in carbon dioxide fixation, as well as the oxidative fragmentation of the pentose substrate in the photorespiration process. Both reactions occur simultaneously and in competition at the same active site. This chain is Ribulose bisphosphate carboxylase large chain (rbcL), found in Cheiropleuria bicuspis (Fern).